The sequence spans 445 residues: Retrovirus-related Pol polyprotein from type-1 retrotransposable element R2 (445 aa).

The Reverse transcriptase domain occupies 1-114; sequence QPSVFNLVKW…LSRDDSLAKA (114 aa). A nucleic acid-binding endonuclease region spans residues 115–445; it reads MLASAGPAAE…GATPRQLIEY (331 aa). The span at 380-389 shows a compositional bias: basic residues; it reads GPRPAHHHQP. A disordered region spans residues 380 to 445; sequence GPRPAHHHQP…GATPRQLIEY (66 aa). A compositionally biased stretch (polar residues) spans 396–405; sequence ATANTGTLQS.

It carries out the reaction DNA(n) + a 2'-deoxyribonucleoside 5'-triphosphate = DNA(n+1) + diphosphate. This is Retrovirus-related Pol polyprotein from type-1 retrotransposable element R2 from Popillia japonica (Japanese beetle).